The chain runs to 406 residues: Protease ElaD (406 aa).

The active site involves His234. Residue Cys316 is the Nucleophile of the active site.

Belongs to the peptidase C79 family.

Functionally, protease that can act as an efficient and specific deubiquitinating enzyme in vitro. Does not possess desumoylating and deneddylating activities. The physiological substrate is unknown. The chain is Protease ElaD (elaD) from Escherichia coli O139:H28 (strain E24377A / ETEC).